Reading from the N-terminus, the 357-residue chain is UDP-N-acetylglucosamine--N-acetylmuramyl-(pentapeptide) pyrophosphoryl-undecaprenol N-acetylglucosamine transferase (357 aa).

Residues 12–14 (TGG), Asn-124, Arg-163, Ser-189, Ile-243, 262–267 (ALTVSE), and Gln-288 each bind UDP-N-acetyl-alpha-D-glucosamine.

Belongs to the glycosyltransferase 28 family. MurG subfamily.

Its subcellular location is the cell inner membrane. It carries out the reaction di-trans,octa-cis-undecaprenyl diphospho-N-acetyl-alpha-D-muramoyl-L-alanyl-D-glutamyl-meso-2,6-diaminopimeloyl-D-alanyl-D-alanine + UDP-N-acetyl-alpha-D-glucosamine = di-trans,octa-cis-undecaprenyl diphospho-[N-acetyl-alpha-D-glucosaminyl-(1-&gt;4)]-N-acetyl-alpha-D-muramoyl-L-alanyl-D-glutamyl-meso-2,6-diaminopimeloyl-D-alanyl-D-alanine + UDP + H(+). Its pathway is cell wall biogenesis; peptidoglycan biosynthesis. In terms of biological role, cell wall formation. Catalyzes the transfer of a GlcNAc subunit on undecaprenyl-pyrophosphoryl-MurNAc-pentapeptide (lipid intermediate I) to form undecaprenyl-pyrophosphoryl-MurNAc-(pentapeptide)GlcNAc (lipid intermediate II). The sequence is that of UDP-N-acetylglucosamine--N-acetylmuramyl-(pentapeptide) pyrophosphoryl-undecaprenol N-acetylglucosamine transferase from Pseudomonas paraeruginosa (strain DSM 24068 / PA7) (Pseudomonas aeruginosa (strain PA7)).